We begin with the raw amino-acid sequence, 170 residues long: MELKNFIRDIPDFPQKGVMFRDITPLVKNPEAFKYAIDTIAEELGKYDFDLIVCPEARGFIIAAPLAYKLDKGLVPVRKPGKLPYKTISDVYELEYGKAELHMHEDAIQPNQKVVIIDDVLATGGTAMALKRLVEKAGGIVVASAFLIELTYLNPRNIIKDLPIIAPIKY.

The protein belongs to the purine/pyrimidine phosphoribosyltransferase family. Homodimer.

The protein localises to the cytoplasm. It carries out the reaction AMP + diphosphate = 5-phospho-alpha-D-ribose 1-diphosphate + adenine. It participates in purine metabolism; AMP biosynthesis via salvage pathway; AMP from adenine: step 1/1. In terms of biological role, catalyzes a salvage reaction resulting in the formation of AMP, that is energically less costly than de novo synthesis. This chain is Adenine phosphoribosyltransferase, found in Fervidobacterium nodosum (strain ATCC 35602 / DSM 5306 / Rt17-B1).